The primary structure comprises 227 residues: Cytochrome c oxidase subunit 2 (227 aa).

The Mitochondrial intermembrane portion of the chain corresponds to 1 to 14; it reads MTHPLQLGFQDATS. A helical transmembrane segment spans residues 15–45; sequence PIMEELLHFHDHTLMIVFLISSLVLYIITLM. The Mitochondrial matrix segment spans residues 46–59; the sequence is LTTKLTHTSTMDAQ. A helical membrane pass occupies residues 60–87; the sequence is EVETVWTILPAIILILIALPSLRILYMM. Topologically, residues 88–227 are mitochondrial intermembrane; the sequence is DEINNPLLTV…YFEDWSVSMT (140 aa). Residues H161, C196, E198, C200, H204, and M207 each coordinate Cu cation. E198 provides a ligand contact to Mg(2+). Residue Y218 is modified to Phosphotyrosine.

The protein belongs to the cytochrome c oxidase subunit 2 family. In terms of assembly, component of the cytochrome c oxidase (complex IV, CIV), a multisubunit enzyme composed of 14 subunits. The complex is composed of a catalytic core of 3 subunits MT-CO1, MT-CO2 and MT-CO3, encoded in the mitochondrial DNA, and 11 supernumerary subunits COX4I, COX5A, COX5B, COX6A, COX6B, COX6C, COX7A, COX7B, COX7C, COX8 and NDUFA4, which are encoded in the nuclear genome. The complex exists as a monomer or a dimer and forms supercomplexes (SCs) in the inner mitochondrial membrane with NADH-ubiquinone oxidoreductase (complex I, CI) and ubiquinol-cytochrome c oxidoreductase (cytochrome b-c1 complex, complex III, CIII), resulting in different assemblies (supercomplex SCI(1)III(2)IV(1) and megacomplex MCI(2)III(2)IV(2)). Found in a complex with TMEM177, COA6, COX18, COX20, SCO1 and SCO2. Interacts with TMEM177 in a COX20-dependent manner. Interacts with COX20. Interacts with COX16. Cu cation serves as cofactor.

The protein resides in the mitochondrion inner membrane. The catalysed reaction is 4 Fe(II)-[cytochrome c] + O2 + 8 H(+)(in) = 4 Fe(III)-[cytochrome c] + 2 H2O + 4 H(+)(out). Component of the cytochrome c oxidase, the last enzyme in the mitochondrial electron transport chain which drives oxidative phosphorylation. The respiratory chain contains 3 multisubunit complexes succinate dehydrogenase (complex II, CII), ubiquinol-cytochrome c oxidoreductase (cytochrome b-c1 complex, complex III, CIII) and cytochrome c oxidase (complex IV, CIV), that cooperate to transfer electrons derived from NADH and succinate to molecular oxygen, creating an electrochemical gradient over the inner membrane that drives transmembrane transport and the ATP synthase. Cytochrome c oxidase is the component of the respiratory chain that catalyzes the reduction of oxygen to water. Electrons originating from reduced cytochrome c in the intermembrane space (IMS) are transferred via the dinuclear copper A center (CU(A)) of subunit 2 and heme A of subunit 1 to the active site in subunit 1, a binuclear center (BNC) formed by heme A3 and copper B (CU(B)). The BNC reduces molecular oxygen to 2 water molecules using 4 electrons from cytochrome c in the IMS and 4 protons from the mitochondrial matrix. The chain is Cytochrome c oxidase subunit 2 (MT-CO2) from Carlito syrichta (Philippine tarsier).